The following is a 77-amino-acid chain: Acyl carrier protein (77 aa).

A Carrier domain is found at S2–Q77. Residue S37 is modified to O-(pantetheine 4'-phosphoryl)serine.

It belongs to the acyl carrier protein (ACP) family. In terms of processing, 4'-phosphopantetheine is transferred from CoA to a specific serine of apo-ACP by AcpS. This modification is essential for activity because fatty acids are bound in thioester linkage to the sulfhydryl of the prosthetic group.

It localises to the cytoplasm. It functions in the pathway lipid metabolism; fatty acid biosynthesis. Carrier of the growing fatty acid chain in fatty acid biosynthesis. The chain is Acyl carrier protein from Leucothrix mucor.